Reading from the N-terminus, the 357-residue chain is tRNA N6-adenosine threonylcarbamoyltransferase (357 aa).

His-116 and His-120 together coordinate Fe cation. Substrate contacts are provided by residues 139 to 143, Asp-172, Gly-185, and Asn-284; that span reads LVSGG. Residue Asp-312 coordinates Fe cation.

This sequence belongs to the KAE1 / TsaD family. Requires Fe(2+) as cofactor.

It is found in the cytoplasm. The enzyme catalyses L-threonylcarbamoyladenylate + adenosine(37) in tRNA = N(6)-L-threonylcarbamoyladenosine(37) in tRNA + AMP + H(+). In terms of biological role, required for the formation of a threonylcarbamoyl group on adenosine at position 37 (t(6)A37) in tRNAs that read codons beginning with adenine. Is involved in the transfer of the threonylcarbamoyl moiety of threonylcarbamoyl-AMP (TC-AMP) to the N6 group of A37, together with TsaE and TsaB. TsaD likely plays a direct catalytic role in this reaction. The sequence is that of tRNA N6-adenosine threonylcarbamoyltransferase from Synechococcus sp. (strain CC9605).